A 213-amino-acid polypeptide reads, in one-letter code: MKDKQFAIPKATAKRLSLYYRIFKRFHAEKIERANSKQIAEAIGIDSATVRRDFSYFGELGRRGFGYDVKKLMTFFADLLNDNSITNVMLVGIGNMGHALLHYRFHERNKMKIIMAFDLDDHPEVGTQTPDGIPIYGISQIKDKIKDTDVKTAILTVPSVKSQEVANLLVDAGVKGILSFSPVHLHLPKDVVVQYVDLTSELQTLLYFMRKED.

Positions Leu18–Phe57 form a DNA-binding region, H-T-H motif. Gly92–Gly97 contacts NAD(+).

Belongs to the transcriptional regulatory Rex family. As to quaternary structure, homodimer.

It is found in the cytoplasm. Modulates transcription in response to changes in cellular NADH/NAD(+) redox state. Binds to the promoter of the aldehyde-alcohol dehydrogenase adhE gene. Functions as a redox-dependent repressor of adhE expression. This Streptococcus pneumoniae (strain ATCC BAA-255 / R6) protein is Redox-sensing transcriptional repressor Rex.